We begin with the raw amino-acid sequence, 191 residues long: uncharacterized protein (191 aa).

A signal peptide spans 1-23 (MKKTMSAITAAAAVTSCFTGFGA).

This is an uncharacterized protein from Bacillus subtilis (strain 168).